The primary structure comprises 815 residues: Probable receptor-like protein kinase At2g39360 (815 aa).

The N-terminal stretch at 1–26 is a signal peptide; the sequence is MINLKLFLELKLCFLITLLCSSHISS. The Extracellular segment spans residues 27–407; it reads VSDTFFINCG…SSSNKSSNTS (381 aa). N-linked (GlcNAc...) asparagine glycans are attached at residues Asn40, Asn45, Asn125, Asn146, Asn209, Asn244, Asn277, Asn331, Asn355, Asn401, and Asn405. The chain crosses the membrane as a helical span at residues 408–428; it reads VGLIAGLSAALCVALVFGVVV. At 429 to 815 the chain is on the cytoplasmic side; the sequence is SWWCIRKRRR…FAQMVREETR (387 aa). Residues 487–761 enclose the Protein kinase domain; the sequence is FDESLVIGVG…GDLLWNLEFM (275 aa). Residues 493-501 and Lys515 each bind ATP; that span reads IGVGGFGKV. The active-site Proton acceptor is Asp612.

Belongs to the protein kinase superfamily. Ser/Thr protein kinase family.

It localises to the cell membrane. This Arabidopsis thaliana (Mouse-ear cress) protein is Probable receptor-like protein kinase At2g39360.